Reading from the N-terminus, the 349-residue chain is Aminomethyltransferase (349 aa).

It belongs to the GcvT family. As to quaternary structure, the glycine cleavage system is composed of four proteins: P, T, L and H.

It carries out the reaction N(6)-[(R)-S(8)-aminomethyldihydrolipoyl]-L-lysyl-[protein] + (6S)-5,6,7,8-tetrahydrofolate = N(6)-[(R)-dihydrolipoyl]-L-lysyl-[protein] + (6R)-5,10-methylene-5,6,7,8-tetrahydrofolate + NH4(+). Its function is as follows. The glycine cleavage system catalyzes the degradation of glycine. This Thermus thermophilus (strain ATCC BAA-163 / DSM 7039 / HB27) protein is Aminomethyltransferase.